A 158-amino-acid chain; its full sequence is Transcription antitermination protein NusB (158 aa).

The span at 1–13 (MSEAGDTSPQPGK) shows a compositional bias: polar residues. The tract at residues 1 to 24 (MSEAGDTSPQPGKTGQPKAGDRRR) is disordered.

It belongs to the NusB family.

In terms of biological role, involved in transcription antitermination. Required for transcription of ribosomal RNA (rRNA) genes. Binds specifically to the boxA antiterminator sequence of the ribosomal RNA (rrn) operons. This Marinobacter nauticus (strain ATCC 700491 / DSM 11845 / VT8) (Marinobacter aquaeolei) protein is Transcription antitermination protein NusB.